We begin with the raw amino-acid sequence, 225 residues long: Protein ERP3 (225 aa).

An N-terminal signal peptide occupies residues 1 to 23; the sequence is MSNLCVLFFQFFFLAQFFAEASP. Over 24–195 the chain is Lumenal; sequence LTFELNKGRK…STEHRIVMFS (172 aa). Residues 33–172 enclose the GOLD domain; sequence KECLYTLTPE…LHVLERNIQY (140 aa). Basic residues predominate over residues 129–138; sequence ERRKARKAQR. A disordered region spans residues 129-149; that stretch reads ERRKARKAQRNLRDSKTDPLQ. A helical membrane pass occupies residues 196 to 216; that stretch reads IYGILLIIGMSCAQIAILEFI. Topologically, residues 217-225 are cytoplasmic; that stretch reads FRESRKHNV.

This sequence belongs to the EMP24/GP25L family.

The protein resides in the endoplasmic reticulum membrane. Involved in vesicular protein trafficking. The protein is Protein ERP3 (ERP3) of Saccharomyces cerevisiae (strain ATCC 204508 / S288c) (Baker's yeast).